We begin with the raw amino-acid sequence, 160 residues long: Transcription elongation factor GreA (160 aa).

The stretch at 1 to 72 forms a coiled coil; that stretch reads MAEKTYPMTQ…QIQILETKIR (72 aa).

Belongs to the GreA/GreB family.

Necessary for efficient RNA polymerase transcription elongation past template-encoded arresting sites. The arresting sites in DNA have the property of trapping a certain fraction of elongating RNA polymerases that pass through, resulting in locked ternary complexes. Cleavage of the nascent transcript by cleavage factors such as GreA or GreB allows the resumption of elongation from the new 3'terminus. GreA releases sequences of 2 to 3 nucleotides. This chain is Transcription elongation factor GreA, found in Streptococcus agalactiae serotype Ia (strain ATCC 27591 / A909 / CDC SS700).